We begin with the raw amino-acid sequence, 297 residues long: Succinate dehydrogenase [ubiquinone] iron-sulfur subunit, mitochondrial (297 aa).

The disordered stretch occupies residues 33 to 55 (TAEALSASRPPIKETKTSTVKEP). The 2Fe-2S ferredoxin-type domain occupies 78–157 (DKPRMQSYTL…ETRIYPLPHT (80 aa)). Positions 117, 122, 125, and 137 each coordinate [2Fe-2S] cluster. A 4Fe-4S ferredoxin-type domain is found at 199-229 (DRKKLDGLYECILCACCSTSCPSYWWNSEEY). The [4Fe-4S] cluster site is built by Cys-209, Cys-212, and Cys-215. Cys-219 provides a ligand contact to [3Fe-4S] cluster. Trp-224 contacts a ubiquinone. Residues Cys-266 and Cys-272 each coordinate [3Fe-4S] cluster. A [4Fe-4S] cluster-binding site is contributed by Cys-276.

The protein belongs to the succinate dehydrogenase/fumarate reductase iron-sulfur protein family. As to quaternary structure, component of complex II composed of four subunits: a flavoprotein (FP), an iron-sulfur protein (IP), and a cytochrome b composed of a large and a small subunit. [2Fe-2S] cluster is required as a cofactor. [3Fe-4S] cluster serves as cofactor. The cofactor is [4Fe-4S] cluster.

It is found in the mitochondrion inner membrane. It carries out the reaction a quinone + succinate = fumarate + a quinol. Its pathway is carbohydrate metabolism; tricarboxylic acid cycle; fumarate from succinate (eukaryal route): step 1/1. Its function is as follows. Iron-sulfur protein (IP) subunit of succinate dehydrogenase (SDH) that is involved in complex II of the mitochondrial electron transport chain and is responsible for transferring electrons from succinate to ubiquinone (coenzyme Q). This chain is Succinate dehydrogenase [ubiquinone] iron-sulfur subunit, mitochondrial (SDH2), found in Zymoseptoria tritici (Speckled leaf blotch fungus).